Reading from the N-terminus, the 213-residue chain is 3,4-dihydroxy-2-butanone 4-phosphate synthase (213 aa).

D-ribulose 5-phosphate-binding positions include 37–38 (RE), D42, 150–154 (RSGHT), and E174. Residue E38 participates in Mg(2+) binding. Residue H153 participates in Mg(2+) binding.

The protein belongs to the DHBP synthase family. Homodimer. It depends on Mg(2+) as a cofactor. Mn(2+) is required as a cofactor.

It catalyses the reaction D-ribulose 5-phosphate = (2S)-2-hydroxy-3-oxobutyl phosphate + formate + H(+). The protein operates within cofactor biosynthesis; riboflavin biosynthesis; 2-hydroxy-3-oxobutyl phosphate from D-ribulose 5-phosphate: step 1/1. Its function is as follows. Catalyzes the conversion of D-ribulose 5-phosphate to formate and 3,4-dihydroxy-2-butanone 4-phosphate. This is 3,4-dihydroxy-2-butanone 4-phosphate synthase from Blochmanniella floridana.